Consider the following 253-residue polypeptide: 3-deoxy-manno-octulosonate cytidylyltransferase (253 aa).

It belongs to the KdsB family.

It localises to the cytoplasm. It catalyses the reaction 3-deoxy-alpha-D-manno-oct-2-ulosonate + CTP = CMP-3-deoxy-beta-D-manno-octulosonate + diphosphate. Its pathway is nucleotide-sugar biosynthesis; CMP-3-deoxy-D-manno-octulosonate biosynthesis; CMP-3-deoxy-D-manno-octulosonate from 3-deoxy-D-manno-octulosonate and CTP: step 1/1. It participates in bacterial outer membrane biogenesis; lipopolysaccharide biosynthesis. Activates KDO (a required 8-carbon sugar) for incorporation into bacterial lipopolysaccharide in Gram-negative bacteria. The sequence is that of 3-deoxy-manno-octulosonate cytidylyltransferase from Neisseria meningitidis serogroup C / serotype 2a (strain ATCC 700532 / DSM 15464 / FAM18).